The primary structure comprises 1510 residues: Chromosome partition protein MukB (1510 aa).

Residues 6 to 30 (ELENEIELESDEVIMENENVEEIVD) are a coiled coil. 75–82 (GGNGAGKS) is an ATP binding site. Coiled coils occupy residues 346 to 506 (QHRL…HKMS), 553 to 611 (QQTP…EDIS), 673 to 706 (MQSQ…RLSQ), 821 to 846 (SAAR…AQIA), 876 to 1064 (EALM…IQLQ), 1094 to 1149 (ERAR…RELV), and 1249 to 1304 (DAIE…LQNI). Positions 707-824 (PDGSEDPRLN…EIPLFGSAAR (118 aa)) are flexible hinge.

It belongs to the SMC family. MukB subfamily. As to quaternary structure, homodimerization via its hinge domain. Binds to DNA via its C-terminal region. Interacts, and probably forms a ternary complex, with MukE and MukF via its C-terminal region. The complex formation is stimulated by calcium or magnesium. Interacts with tubulin-related protein FtsZ.

Its subcellular location is the cytoplasm. It is found in the nucleoid. Plays a central role in chromosome condensation, segregation and cell cycle progression. Functions as a homodimer, which is essential for chromosome partition. Involved in negative DNA supercoiling in vivo, and by this means organize and compact chromosomes. May achieve or facilitate chromosome segregation by condensation DNA from both sides of a centrally located replisome during cell division. The protein is Chromosome partition protein MukB of Haemophilus influenzae (strain PittGG).